A 250-amino-acid polypeptide reads, in one-letter code: Small ribosomal subunit protein uS3z (250 aa).

The region spanning 21–92 (LNEVLTRELA…SVELYAEKVN (72 aa)) is the KH type-2 domain.

The protein belongs to the universal ribosomal protein uS3 family. As to quaternary structure, interacts with SNRNP35.

This chain is Small ribosomal subunit protein uS3z (RPS3A), found in Arabidopsis thaliana (Mouse-ear cress).